We begin with the raw amino-acid sequence, 334 residues long: Proline-serine-threonine phosphatase-interacting protein 2 (334 aa).

The region spanning 4–264 (SLFKGNFWSA…SLEMCSIQRD (261 aa)) is the F-BAR domain. Residues 66 to 166 (GQSEINTLKR…AVSRSANLVN (101 aa)) adopt a coiled-coil conformation. The segment at 295–322 (VPAGKATGPNLARRGPLPIPKSSPDDPN) is disordered. Tyr323 and Tyr329 each carry phosphotyrosine.

In terms of processing, phosphorylated on tyrosine.

It is found in the cytoplasm. The protein localises to the membrane. Functionally, binds to F-actin. May be involved in regulation of the actin cytoskeleton. The sequence is that of Proline-serine-threonine phosphatase-interacting protein 2 (PSTPIP2) from Homo sapiens (Human).